The chain runs to 293 residues: Ribosomal protein L11 methyltransferase (293 aa).

4 residues coordinate S-adenosyl-L-methionine: Thr145, Gly166, Asp188, and Asn230.

This sequence belongs to the methyltransferase superfamily. PrmA family.

The protein localises to the cytoplasm. The catalysed reaction is L-lysyl-[protein] + 3 S-adenosyl-L-methionine = N(6),N(6),N(6)-trimethyl-L-lysyl-[protein] + 3 S-adenosyl-L-homocysteine + 3 H(+). In terms of biological role, methylates ribosomal protein L11. This chain is Ribosomal protein L11 methyltransferase, found in Escherichia coli O81 (strain ED1a).